Reading from the N-terminus, the 428-residue chain is E3 ubiquitin-protein ligase RNF128 (428 aa).

The N-terminal stretch at 1-38 is a signal peptide; that stretch reads MGPPPGIGVYCRGGCGAARLLAWCFLLALSPHAPGSRG. Residues N48, N59, and N101 are each glycosylated (N-linked (GlcNAc...) asparagine). The region spanning 75–183 is the PA domain; sequence SPLEPVSGVL…LKGTKILQSI (109 aa). Residues 208 to 228 form a helical membrane-spanning segment; that stretch reads IFFVSVSFFIITAATVGYFIF. The segment at 277 to 318 adopts an RING-type; atypical zinc-finger fold; that stretch reads CAVCIELYKPNDLVRILTCNHIFHKTCVDPWLLEHRTCPMCK. Residues 342 to 351 are compositionally biased toward polar residues; that stretch reads VSNEASNTAS. Positions 342 to 428 are disordered; the sequence is VSNEASNTAS…QEAAVREIKS (87 aa).

Post-translationally, auto-ubiquitinated. Controls the development of T-cell clonal anergy by ubiquitination. Expressed in brain, kidney, heart, liver, ovary, testis and thymus. Expression increased as early as 4 hours by 5- to 7-fold in anergized cultures as compared to resting or activated cells.

Its subcellular location is the cytoplasm. It is found in the endomembrane system. The protein resides in the cytoskeleton. It localises to the perinuclear region. It carries out the reaction S-ubiquitinyl-[E2 ubiquitin-conjugating enzyme]-L-cysteine + [acceptor protein]-L-lysine = [E2 ubiquitin-conjugating enzyme]-L-cysteine + N(6)-ubiquitinyl-[acceptor protein]-L-lysine.. The protein operates within protein modification; protein ubiquitination. Its function is as follows. E3 ubiquitin-protein ligase that catalyzes 'Lys-27', 'Lys-48'- or 'Lys-63'-linked polyubiquitin chains formation and plays a role in different biological processes such as modulation of immune response, cytoskeletal dynamics or protein homeostasis. Inhibits IL2 and IL4 transcription, thereby playing an important role in the induction of the anergic phenotype, a long-term stable state of T-lymphocyte unresponsiveness to antigenic stimulation associated with the blockade of interleukin production. Ubiquitinates ARPC5 with 'Lys-48' linkages and COR1A with 'Lys-63' linkages leading to their degradation, down-regulation of these cytoskeletal components results in impaired lamellipodium formation and reduced accumulation of F-actin at the immunological synapse. Functions in the patterning of the dorsal ectoderm; sensitizes ectoderm to respond to neural-inducing signals. Plays a positive role in innate immune response by promoting 'Lys-63'-linked ubiquitination of TBK1 after RNA- or DNA-virus infection. Regulates alveolar macrophage activation and neutrophil infiltration by interacting with TLR4, targeting it for degradation, and inhibiting NF-kappa-B activation, hence decreasing pro-inflammatory cytokines. Negatively regulates the IL-3/STAT5 signaling pathway by facilitating 'Lys-27'-linked polyubiquitination of IL3RA leading to its degradation via lysosomal pathway. Directly regulates the N-glycosylation process in the endoplasmic reticulum by targeting the glycosyl-transferase RPN1 for ubiquitination and degradation. Other substrates targeted for degradation by RNF128 include transmembrane proteins CD40L, CD83 or the tetraspanin CD151. The sequence is that of E3 ubiquitin-protein ligase RNF128 (Rnf128) from Mus musculus (Mouse).